A 415-amino-acid polypeptide reads, in one-letter code: Serine hydroxymethyltransferase (415 aa).

(6S)-5,6,7,8-tetrahydrofolate-binding positions include leucine 115 and 119-121 (GHL). At lysine 224 the chain carries N6-(pyridoxal phosphate)lysine. 348 to 350 (SPF) is a binding site for (6S)-5,6,7,8-tetrahydrofolate.

Belongs to the SHMT family. As to quaternary structure, homodimer. Requires pyridoxal 5'-phosphate as cofactor.

Its subcellular location is the cytoplasm. The catalysed reaction is (6R)-5,10-methylene-5,6,7,8-tetrahydrofolate + glycine + H2O = (6S)-5,6,7,8-tetrahydrofolate + L-serine. It functions in the pathway one-carbon metabolism; tetrahydrofolate interconversion. It participates in amino-acid biosynthesis; glycine biosynthesis; glycine from L-serine: step 1/1. In terms of biological role, catalyzes the reversible interconversion of serine and glycine with tetrahydrofolate (THF) serving as the one-carbon carrier. This reaction serves as the major source of one-carbon groups required for the biosynthesis of purines, thymidylate, methionine, and other important biomolecules. Also exhibits THF-independent aldolase activity toward beta-hydroxyamino acids, producing glycine and aldehydes, via a retro-aldol mechanism. This chain is Serine hydroxymethyltransferase, found in Latilactobacillus sakei subsp. sakei (strain 23K) (Lactobacillus sakei subsp. sakei).